The sequence spans 273 residues: Holocytochrome c-type synthase (273 aa).

Over residues 1–18 (MGLSASSPAATAQSAAEP) the composition is skewed to low complexity. The tract at residues 1-39 (MGLSASSPAATAQSAAEPSKQHQVASPPSECPMHQEKMR) is disordered. 2 HRM repeats span residues 30 to 35 (ECPMHQ) and 40 to 45 (GCPMHM).

It belongs to the cytochrome c-type heme lyase family.

The protein localises to the mitochondrion inner membrane. The catalysed reaction is holo-[cytochrome c] = apo-[cytochrome c] + heme b. Its function is as follows. Lyase that catalyzes the covalent linking of the heme group to the cytochrome C apoprotein to produce the mature functional cytochrome. This chain is Holocytochrome c-type synthase (HCCS), found in Gallus gallus (Chicken).